Here is a 313-residue protein sequence, read N- to C-terminus: Ribosomal RNA small subunit methyltransferase H (313 aa).

S-adenosyl-L-methionine is bound by residues 35 to 37 (GGH), D55, F79, D101, and Q108.

This sequence belongs to the methyltransferase superfamily. RsmH family.

Its subcellular location is the cytoplasm. It carries out the reaction cytidine(1402) in 16S rRNA + S-adenosyl-L-methionine = N(4)-methylcytidine(1402) in 16S rRNA + S-adenosyl-L-homocysteine + H(+). Its function is as follows. Specifically methylates the N4 position of cytidine in position 1402 (C1402) of 16S rRNA. This chain is Ribosomal RNA small subunit methyltransferase H, found in Escherichia coli O127:H6 (strain E2348/69 / EPEC).